The following is a 221-amino-acid chain: NAD(P)H-hydrate epimerase (221 aa).

The YjeF N-terminal domain maps to methionine 9–serine 219. Glycine 60–aspartate 64 contacts (6S)-NADPHX. 2 residues coordinate K(+): asparagine 61 and aspartate 131. Residues glycine 135–glutamate 141, tyrosine 146, and aspartate 164 each bind (6S)-NADPHX. K(+) is bound at residue serine 167.

The protein belongs to the NnrE/AIBP family. K(+) is required as a cofactor.

The enzyme catalyses (6R)-NADHX = (6S)-NADHX. It catalyses the reaction (6R)-NADPHX = (6S)-NADPHX. Functionally, catalyzes the epimerization of the S- and R-forms of NAD(P)HX, a damaged form of NAD(P)H that is a result of enzymatic or heat-dependent hydration. This is a prerequisite for the S-specific NAD(P)H-hydrate dehydratase to allow the repair of both epimers of NAD(P)HX. The polypeptide is NAD(P)H-hydrate epimerase (Elusimicrobium minutum (strain Pei191)).